An 888-amino-acid polypeptide reads, in one-letter code: MLKNPFKKKSIADKYQTLIREINALESTVKTLTDGELRNKTNQLKQRYQDEQNLNNLIVESFALTREASYRTLGLRHFDVQLIGGLVLNGGKIAEMRTGEGKTLVATLPAYLNALTKKGVHIVTVNEYLASRDQTSMGQIYRFLGLETGLIQEKMTTPERQRNYKADITYVTNNELGFDYLRDNLALNIRDVFLRPFNYCIVDEVDSVLIDEALTPLIIANSVKTCVDKYIIASEITDYLELNVHFEIDEKNKSVLLTNQGTIQIEKILGVQDLYNPRDPWIPYVINAIRASSLFFRDVHYIVQNNRIVIVDEFTGRIMPDRRWRHGLHQAVEAKENVAIRQTTEITASITYQNFFLVYPKLSGMTGTAKTAEVEFDKIYSLPVEEIPTARPNLRQDLPDLIYKDEFSKWNAIAKECQNISLVKQPILIGTTTVEKSEMLAQLLQEYRLSHQILNAKPENVRRESEIVAQAGKKGSITIATNMAGRGTDIILGGNIQFKVRKDLYNILVTYKYQTKENKKDSLSRSLQIFPLLKKLQRTSQKFLTVLNCLINNKQFLNLSDVEVLKILNESELIRVPKISYQCSMKFLINELVNFEKKTQKLDNVIVKNLGGLYIIGTERNDSQRIDNQLRGRCGRQGDPGKSRFFLSVEDKLIRLFGDARLENVLKSQLLDDLPLESELVTKILDSAQKRVEERNYELRKNLFDYDDILNKQRNVVYYERRKVLESESARIKILAYGEQVISEITSKLRRKKVFGSQLISRIRNLLGTKFLLNFPSSDLNNLESIDFQTYLLQEFWLSYESKILELEVEYPGIIQEFERTLILIYMDREWKEHLQKMSLLRDAVGWRKYGQRNPLSEYKEDAYKLFKYRGIVTRHLVIYELLRSSIL.

ATP-binding positions include Gln-81, 99–103 (GEGKT), and Asp-489.

Belongs to the SecA family.

The protein resides in the plastid. Its subcellular location is the chloroplast stroma. The protein localises to the chloroplast thylakoid membrane. It catalyses the reaction ATP + H2O + cellular proteinSide 1 = ADP + phosphate + cellular proteinSide 2.. Its function is as follows. Has a central role in coupling the hydrolysis of ATP to the transfer of proteins across the thylakoid membrane. The protein is Protein translocase subunit SecA of Trieres chinensis (Marine centric diatom).